We begin with the raw amino-acid sequence, 246 residues long: Uridylate kinase (246 aa).

An ATP-binding site is contributed by 20–23; sequence KISG. The tract at residues 28–33 is involved in allosteric activation by GTP; that stretch reads GDQGYG. Glycine 62 contacts UMP. Positions 63 and 67 each coordinate ATP. Residues aspartate 82 and 143 to 150 each bind UMP; that span reads TGNPYFTT. Threonine 170, tyrosine 176, and aspartate 179 together coordinate ATP.

It belongs to the UMP kinase family. In terms of assembly, homohexamer.

The protein resides in the cytoplasm. The catalysed reaction is UMP + ATP = UDP + ADP. It participates in pyrimidine metabolism; CTP biosynthesis via de novo pathway; UDP from UMP (UMPK route): step 1/1. Allosterically activated by GTP. Inhibited by UTP. In terms of biological role, catalyzes the reversible phosphorylation of UMP to UDP. This Cereibacter sphaeroides (strain ATCC 17029 / ATH 2.4.9) (Rhodobacter sphaeroides) protein is Uridylate kinase.